The chain runs to 508 residues: Histidine ammonia-lyase (508 aa).

The 5-imidazolinone (Ala-Gly) cross-link spans 143-145; that stretch reads ASG. S144 is subject to 2,3-didehydroalanine (Ser).

It belongs to the PAL/histidase family. In terms of processing, contains an active site 4-methylidene-imidazol-5-one (MIO), which is formed autocatalytically by cyclization and dehydration of residues Ala-Ser-Gly.

It localises to the cytoplasm. The enzyme catalyses L-histidine = trans-urocanate + NH4(+). The protein operates within amino-acid degradation; L-histidine degradation into L-glutamate; N-formimidoyl-L-glutamate from L-histidine: step 1/3. The chain is Histidine ammonia-lyase from Caldanaerobacter subterraneus subsp. tengcongensis (strain DSM 15242 / JCM 11007 / NBRC 100824 / MB4) (Thermoanaerobacter tengcongensis).